The sequence spans 631 residues: Nucleoside triphosphatase I (631 aa).

The 163-residue stretch at 42–204 folds into the Helicase ATP-binding domain; that stretch reads FLGLDTMHSI…TMIVNLLRPK (163 aa). 55-62 provides a ligand contact to ATP; that stretch reads HDTGVGKT. Residues 141–144 carry the DEXH box motif; the sequence is DECH. The Helicase C-terminal domain occupies 367-536; that stretch reads KFTEVCLKIL…LFKVFKESSI (170 aa). The interval 457 to 524 is binding to the cap-specific mRNA (nucleoside-2'-O-)-methyltransferase; that stretch reads DIFILDMTWN…NIIKTKSKEF (68 aa).

This sequence belongs to the helicase family. NPH I subfamily. As to quaternary structure, monomer. Interacts (via C-terminus) with RAP94 (via N-terminus). Interacts with the cap-specific mRNA (nucleoside-2'-O-)-methyltransferase.

The protein resides in the virion. The enzyme catalyses a ribonucleoside 5'-triphosphate + H2O = a ribonucleoside 5'-diphosphate + phosphate + H(+). In terms of biological role, DNA-dependent ATPase required for providing the needed energy to achieve the termination of early transcripts. Acts in concert with the RAP94 subunit of the virion RNA polymerase and the capping enzyme/VTF to catalyze release of UUUUUNU-containing nascent RNA from the elongation complex. NPH-I must bind ssDNA in order to exhibit ATPase activity. This Erythrocebus patas (Red guenon) protein is Nucleoside triphosphatase I (NPH1).